Here is a 299-residue protein sequence, read N- to C-terminus: Protein FAM228A (299 aa).

The disordered stretch occupies residues 135–201; sequence AKGTSYQHGR…GRNRYKGASS (67 aa). Residues 146–159 are compositionally biased toward basic and acidic residues; it reads KTHDTQKEAKETEK. At S264 the chain carries Phosphoserine.

It belongs to the FAM228 family.

The polypeptide is Protein FAM228A (Fam228a) (Mus musculus (Mouse)).